The sequence spans 193 residues: NADH-quinone oxidoreductase subunit B (193 aa).

Residues Cys72, Cys73, Cys137, and Cys167 each coordinate [4Fe-4S] cluster.

Belongs to the complex I 20 kDa subunit family. In terms of assembly, NDH-1 is composed of 14 different subunits. Subunits NuoB, C, D, E, F, and G constitute the peripheral sector of the complex. Requires [4Fe-4S] cluster as cofactor.

Its subcellular location is the cell inner membrane. The catalysed reaction is a quinone + NADH + 5 H(+)(in) = a quinol + NAD(+) + 4 H(+)(out). Functionally, NDH-1 shuttles electrons from NADH, via FMN and iron-sulfur (Fe-S) centers, to quinones in the respiratory chain. The immediate electron acceptor for the enzyme in this species is believed to be ubiquinone. Couples the redox reaction to proton translocation (for every two electrons transferred, four hydrogen ions are translocated across the cytoplasmic membrane), and thus conserves the redox energy in a proton gradient. The chain is NADH-quinone oxidoreductase subunit B from Caulobacter vibrioides (strain ATCC 19089 / CIP 103742 / CB 15) (Caulobacter crescentus).